A 344-amino-acid chain; its full sequence is Heat-inducible transcription repressor HrcA (344 aa).

Belongs to the HrcA family.

Negative regulator of class I heat shock genes (grpE-dnaK-dnaJ and groELS operons). Prevents heat-shock induction of these operons. This is Heat-inducible transcription repressor HrcA from Streptococcus sanguinis (strain SK36).